The sequence spans 329 residues: MKKSLIALTLAALPVAAMADVTLYGTIKTGVETSRSVEHNGGQVVSVETGTGIVDLGSKIGFKGQEDLGNGLKAIWQVEQKASIAGTDSGWGNRQSFIGLKGGFGKLRVGRLNSVLKDTGDINPWDSKSDYLGVNKIAEPEARLISVRYDSPEFAGLSGSVQYALNDNVGRHNSESYHAGFNYKNGGFFVQYGGAYKRHQDVDDVKIEKYQIHRLVSGYDNDALYASVAVQQQDAKLVEDNSHNSQTEVAATLAYRFGNVTPRVSYAHGFKGSVDDAKRDNTYDQVVVGAEYDFSKRTSALVSAGWLQEGKGENKFVATAGGVGLRHKF.

The N-terminal stretch at 1–19 is a signal peptide; sequence MKKSLIALTLAALPVAAMA.

It belongs to the Gram-negative porin family. Homotrimer.

It localises to the cell outer membrane. Functionally, serves as a slightly cation selective porin. The sequence is that of Major outer membrane protein P.IB (porB) from Neisseria meningitidis serogroup A / serotype 4A (strain DSM 15465 / Z2491).